Reading from the N-terminus, the 250-residue chain is Proteasome subunit alpha type-4 (250 aa).

Belongs to the peptidase T1A family. As to quaternary structure, the 26S proteasome consists of a 20S proteasome core and two 19S regulatory subunits. The 20S proteasome core is composed of 28 subunits that are arranged in four stacked rings, resulting in a barrel-shaped structure. The two end rings are each formed by seven alpha subunits, and the two central rings are each formed by seven beta subunits. The catalytic chamber with the active sites is on the inside of the barrel.

Its subcellular location is the cytoplasm. The protein resides in the nucleus. In terms of biological role, the proteasome is a multicatalytic proteinase complex which is characterized by its ability to cleave peptides with Arg, Phe, Tyr, Leu, and Glu adjacent to the leaving group at neutral or slightly basic pH. The proteasome has an ATP-dependent proteolytic activity. The protein is Proteasome subunit alpha type-4 (PAC1) of Spinacia oleracea (Spinach).